Here is a 129-residue protein sequence, read N- to C-terminus: Large ribosomal subunit protein bL17 (129 aa).

The protein belongs to the bacterial ribosomal protein bL17 family. Part of the 50S ribosomal subunit. Contacts protein L32.

The protein is Large ribosomal subunit protein bL17 of Stutzerimonas stutzeri (strain A1501) (Pseudomonas stutzeri).